Consider the following 119-residue polypeptide: NADH-quinone oxidoreductase subunit A (119 aa).

3 consecutive transmembrane segments (helical) span residues 9–29 (VILFILVGVGVGVAPQVLGFL), 63–83 (LVAILFILFDLEIAFLFPWAV), and 88–108 (IGATGFWAMMIFLGILVVGFV).

Belongs to the complex I subunit 3 family. In terms of assembly, NDH-1 is composed of 14 different subunits. Subunits NuoA, H, J, K, L, M, N constitute the membrane sector of the complex.

It localises to the cell inner membrane. The enzyme catalyses a quinone + NADH + 5 H(+)(in) = a quinol + NAD(+) + 4 H(+)(out). NDH-1 shuttles electrons from NADH, via FMN and iron-sulfur (Fe-S) centers, to quinones in the respiratory chain. The immediate electron acceptor for the enzyme in this species is believed to be ubiquinone. Couples the redox reaction to proton translocation (for every two electrons transferred, four hydrogen ions are translocated across the cytoplasmic membrane), and thus conserves the redox energy in a proton gradient. The protein is NADH-quinone oxidoreductase subunit A of Leptothrix cholodnii (strain ATCC 51168 / LMG 8142 / SP-6) (Leptothrix discophora (strain SP-6)).